A 305-amino-acid polypeptide reads, in one-letter code: Ornithine carbamoyltransferase (305 aa).

Carbamoyl phosphate contacts are provided by residues 52-55 (STRT), Gln79, Arg103, and 130-133 (HPLQ). Residues Asn162, Asp224, and 228–229 (SM) contribute to the L-ornithine site. Carbamoyl phosphate-binding positions include 264-265 (CL) and Arg292.

The protein belongs to the aspartate/ornithine carbamoyltransferase superfamily. OTCase family.

It localises to the cytoplasm. The catalysed reaction is carbamoyl phosphate + L-ornithine = L-citrulline + phosphate + H(+). The protein operates within amino-acid biosynthesis; L-arginine biosynthesis; L-arginine from L-ornithine and carbamoyl phosphate: step 1/3. Reversibly catalyzes the transfer of the carbamoyl group from carbamoyl phosphate (CP) to the N(epsilon) atom of ornithine (ORN) to produce L-citrulline. In Pyrobaculum aerophilum (strain ATCC 51768 / DSM 7523 / JCM 9630 / CIP 104966 / NBRC 100827 / IM2), this protein is Ornithine carbamoyltransferase.